Consider the following 478-residue polypeptide: ATP synthase subunit beta (478 aa).

An ATP-binding site is contributed by 152–159; that stretch reads GGAGVGKT.

Belongs to the ATPase alpha/beta chains family. As to quaternary structure, F-type ATPases have 2 components, CF(1) - the catalytic core - and CF(0) - the membrane proton channel. CF(1) has five subunits: alpha(3), beta(3), gamma(1), delta(1), epsilon(1). CF(0) has three main subunits: a(1), b(2) and c(9-12). The alpha and beta chains form an alternating ring which encloses part of the gamma chain. CF(1) is attached to CF(0) by a central stalk formed by the gamma and epsilon chains, while a peripheral stalk is formed by the delta and b chains.

It localises to the cell membrane. The enzyme catalyses ATP + H2O + 4 H(+)(in) = ADP + phosphate + 5 H(+)(out). Its function is as follows. Produces ATP from ADP in the presence of a proton gradient across the membrane. The catalytic sites are hosted primarily by the beta subunits. The polypeptide is ATP synthase subunit beta (Wolbachia pipientis subsp. Culex pipiens (strain wPip)).